We begin with the raw amino-acid sequence, 224 residues long: UPF0758 protein Noc_0236 (224 aa).

In terms of domain architecture, MPN spans 102–224 (VLTDPQTTQR…TLSFAERGLL (123 aa)). 3 residues coordinate Zn(2+): His173, His175, and Asp186. The short motif at 173–186 (HNHPSGVAEPSRAD) is the JAMM motif element.

It belongs to the UPF0758 family.

The sequence is that of UPF0758 protein Noc_0236 from Nitrosococcus oceani (strain ATCC 19707 / BCRC 17464 / JCM 30415 / NCIMB 11848 / C-107).